The primary structure comprises 115 residues: MNNIIQLLETEQTQGKEIPDFRAGDTVTVQVKVKEGNRERLQAFEGVVIARRHRGLNSSFTVRKVSHGEGVERVFQLYSPLIASIKVNRRGDVRRAKLYYLRNLRGRKAKIKEKI.

The protein belongs to the bacterial ribosomal protein bL19 family.

This protein is located at the 30S-50S ribosomal subunit interface and may play a role in the structure and function of the aminoacyl-tRNA binding site. This is Large ribosomal subunit protein bL19 from Coxiella burnetii (strain CbuK_Q154) (Coxiella burnetii (strain Q154)).